We begin with the raw amino-acid sequence, 78 residues long: Small ribosomal subunit protein bS20 (78 aa).

Belongs to the bacterial ribosomal protein bS20 family.

Binds directly to 16S ribosomal RNA. The protein is Small ribosomal subunit protein bS20 of Streptococcus pneumoniae serotype 2 (strain D39 / NCTC 7466).